The following is a 101-amino-acid chain: Glutaredoxin-1 (101 aa).

A Glutaredoxin domain is found at 3-101 (DSFVQSKLRD…MMLRQIGALV (99 aa)). A disulfide bridge connects residues cysteine 23 and cysteine 26.

The protein belongs to the glutaredoxin family.

It is found in the cytoplasm. Functionally, has a glutathione-disulfide oxidoreductase activity in the presence of NADPH and glutathione reductase. Reduces low molecular weight disulfides and proteins. This Gallus gallus (Chicken) protein is Glutaredoxin-1 (GLRX).